Reading from the N-terminus, the 498-residue chain is Minor fimbrium subunit Mfa1 (498 aa).

Positions 1-19 (MKLNKMFLVGALLSLGFAS) are cleaved as a signal peptide. Cys-20 carries N-palmitoyl cysteine lipidation. Residue Cys-20 is the site of S-diacylglycerol cysteine attachment. Positions 20–50 (CSKEGNGPAPDSSSTADTHMSVSMSLPQHNR) are excised as a propeptide. The disordered stretch occupies residues 436 to 476 (SGNPFVPTDPDPNNPDTPDNPDTPDPEDPDTPNPEEPLPVQ).

Belongs to the bacteroidetes fimbrillin superfamily. FimA/Mfa1 family. Structural component of the fimbrial stalk. Minor fimbriae are composed of a structural subunit, such as the 53 kDa fimbrillin, and the accessory subunits Mfa3, Mfa4 and Mfa5. Fimbrium assembly occurs by linear, head-to-tail oligomerization of fimbrial subunits. This is mediated via insertion of a C-terminal beta-strand from one subunit into a groove in the N-terminal domain of the following subunit.

It is found in the fimbrium. The protein resides in the cell outer membrane. Functionally, structural subunit of the minor fimbriae. These filamentous pili are attached to the cell surface; they mediate biofilm formation, adhesion onto host cells and onto other bacteria that are part of the oral microbiome. They play an important role in invasion of periodontal tissues and are recognized as major virulence factors. Mfa1 orthologs from different strains have highly divergent sequences, and this correlates with pathogenicity. This Porphyromonas gingivalis (Bacteroides gingivalis) protein is Minor fimbrium subunit Mfa1.